The following is a 169-amino-acid chain: Peptide deformylase (169 aa).

Cysteine 91 and histidine 133 together coordinate Fe cation. Glutamate 134 is a catalytic residue. Histidine 137 provides a ligand contact to Fe cation.

The protein belongs to the polypeptide deformylase family. Fe(2+) is required as a cofactor.

The enzyme catalyses N-terminal N-formyl-L-methionyl-[peptide] + H2O = N-terminal L-methionyl-[peptide] + formate. Removes the formyl group from the N-terminal Met of newly synthesized proteins. Requires at least a dipeptide for an efficient rate of reaction. N-terminal L-methionine is a prerequisite for activity but the enzyme has broad specificity at other positions. The polypeptide is Peptide deformylase (Aliivibrio salmonicida (strain LFI1238) (Vibrio salmonicida (strain LFI1238))).